The primary structure comprises 39 residues: Phospholipase A2 (39 aa).

Ca(2+) contacts are provided by Trp10, Gly12, and Gly14. The cysteines at positions 11 and 33 are disulfide-linked. The active site involves His36. Asp37 is a Ca(2+) binding site.

Ca(2+) is required as a cofactor. Expressed uniformly in tentacles (at protein level).

The protein resides in the secreted. Its subcellular location is the nematocyst. The catalysed reaction is a 1,2-diacyl-sn-glycero-3-phosphocholine + H2O = a 1-acyl-sn-glycero-3-phosphocholine + a fatty acid + H(+). Inhibited by morin and p-BPB. Functionally, PA2 catalyzes the calcium-dependent hydrolysis of the 2-acyl groups in 3-sn-phosphoglycerides. Induces insulin secretion in isolated rat islets under high glucose concentration conditions, but not under low glucose concentration conditions. Increases perfusion pressure, renal vascular resistance, urinary flow, glomerular filtration rate, and potassium, sodium, and chloride excretion levels in rat kidney. Does not increase perfusion pressure in the rat mesenteric vascular bed. The chain is Phospholipase A2 from Bunodosoma caissarum (Sea anemone).